A 144-amino-acid polypeptide reads, in one-letter code: MAEIFESVDKNKDGKILWDEFAEAIRVFSPQITSEEIDKMFIVLDVDGDGQIDDVEFASCLMVNGGGEKDTEEEVVMKEAFDLYDMDGDGKISASEIHVVLKRLGEKHTMEDCVVMVQTVDKDSDGFVNFEEFKIMMNSNKESH.

EF-hand domains are found at residues 1-31 (MAEI…FSPQ), 32-67 (ITSE…NGGG), 72-107 (EEEV…LGEK), and 108-143 (HTME…NKES). Ca(2+) contacts are provided by D45, D47, D49, Q51, E56, D85, D87, D89, K91, E96, D121, D123, D125, and E132.

In terms of biological role, potential calcium sensor. This is Probable calcium-binding protein CML31 (CML31) from Arabidopsis thaliana (Mouse-ear cress).